A 74-amino-acid polypeptide reads, in one-letter code: Putative membrane protein insertion efficiency factor (74 aa).

The protein belongs to the UPF0161 family.

The protein resides in the cell membrane. In terms of biological role, could be involved in insertion of integral membrane proteins into the membrane. The chain is Putative membrane protein insertion efficiency factor from Anoxybacillus flavithermus (strain DSM 21510 / WK1).